The following is a 198-amino-acid chain: Coagulation factor XIII A chain (198 aa).

A disordered region spans residues 1–36; it reads MSESSGTAFGGRRAIPPNTSNAAENDPPTVELQGLV. Residue Ser-2 is modified to N-acetylserine. Residues 2–38 constitute a propeptide, activation peptide; that stretch reads SESSGTAFGGRRAIPPNTSNAAENDPPTVELQGLVPR.

It belongs to the transglutaminase superfamily. Transglutaminase family. In terms of assembly, tetramer of two A chains (F13A1) and two B (F13B) chains. It depends on Ca(2+) as a cofactor. The activation peptide is released by thrombin.

Its subcellular location is the cytoplasm. It is found in the secreted. The enzyme catalyses L-glutaminyl-[protein] + L-lysyl-[protein] = [protein]-L-lysyl-N(6)-5-L-glutamyl-[protein] + NH4(+). Functionally, factor XIII is activated by thrombin and calcium ion to a transglutaminase that catalyzes the formation of gamma-glutamyl-epsilon-lysine cross-links between fibrin chains, thus stabilizing the fibrin clot. Also cross-link alpha-2-plasmin inhibitor, or fibronectin, to the alpha chains of fibrin. In Bos taurus (Bovine), this protein is Coagulation factor XIII A chain (F13A1).